A 949-amino-acid polypeptide reads, in one-letter code: Syndetin (949 aa).

The tract at residues 1–28 is disordered; sequence MQKIKSLMTRQGLRSPQESVHDLSPIEN. The span at 8–18 shows a compositional bias: polar residues; sequence MTRQGLRSPQE. 2 coiled-coil regions span residues 82 to 104 and 198 to 226; these read SLQE…LERV and YSCI…LSKI. The segment at 509–581 is disordered; sequence FEIQADSKDD…ETLRSRKKSD (73 aa). Over residues 569–581 the composition is skewed to basic and acidic residues; that stretch reads VSRETLRSRKKSD.

It belongs to the syndetin family. Component of the endosome-associated retrograde protein (EARP) complex.

Its subcellular location is the recycling endosome. It localises to the membrane. Functionally, acts as a component of the EARP complex that is involved in endocytic recycling. The EARP complex associates with Rab4-positive endosomes and promotes recycling of internalized transferrin receptor (TFRC) to the plasma membrane. This is Syndetin from Gallus gallus (Chicken).